Here is a 716-residue protein sequence, read N- to C-terminus: Fusoxypene synthase (716 aa).

A sesterterpenoid synthase region spans residues 4–328 (LSYQSRLIPP…WLSACSRQNT (325 aa)). Mg(2+) is bound at residue Asp-96. Asp-96 lines the substrate pocket. Residues 187–190 (RMTN) form a substrate region. Asn-231 is a substrate binding site. Residues 235–239 (SYERE) form a substrate region. Positions 329–711 (WKTNCSIDGK…CLATLSMEGC (383 aa)) are geranylfarnesyl diphosphate synthase. Isopentenyl diphosphate contacts are provided by Lys-422, Arg-425, and His-454. Residues Asp-461 and Asp-465 each coordinate Mg(2+). Arg-470 serves as a coordination point for dimethylallyl diphosphate. Arg-471 lines the isopentenyl diphosphate pocket. Positions 548, 549, 587, 594, and 602 each coordinate dimethylallyl diphosphate.

It in the N-terminal section; belongs to the terpene synthase family. This sequence in the C-terminal section; belongs to the FPP/GGPP synthase family.

The catalysed reaction is 4 isopentenyl diphosphate + dimethylallyl diphosphate = (2E,6E,10E,14E)-geranylfarnesyl diphosphate + 4 diphosphate. It carries out the reaction (2E,6E,10E,14E)-geranylfarnesyl diphosphate = fusoxypene A + diphosphate. It catalyses the reaction (2E,6E,10E,14E)-geranylfarnesyl diphosphate = fusoxypene B + diphosphate. The enzyme catalyses (2E,6E,10E,14E)-geranylfarnesyl diphosphate = fusoxypene C + diphosphate. The catalysed reaction is (2E,6E,10E,14E)-geranylfarnesyl diphosphate = (-)-astellatene + diphosphate. Its function is as follows. Bifunctional sesterterpenoid synthase that performs both prenyl transferase and terpene cyclase activity, converting isopentenyl diphosphate and dimethylallyl diphosphate into geranylfarnesyl diphosphate (GFPP) and then converting GFPP into the enantiomeric sesterterpenes with a 5-6-7-3-5 ring system fusoxypene A, fusoxypene B, fusoxypene C and (-)-astellatene. The chain is Fusoxypene synthase from Fusarium oxysporum (Fusarium vascular wilt).